The following is a 148-amino-acid chain: Ubiquitin-conjugating enzyme E2 13 (148 aa).

The 147-residue stretch at 2-148 (ALPKRIIKEI…AREWTKKYAV (147 aa)) folds into the UBC core domain. The Glycyl thioester intermediate role is filled by Cys-86.

Belongs to the ubiquitin-conjugating enzyme family. In terms of assembly, heterodimer with spm2.

The catalysed reaction is S-ubiquitinyl-[E1 ubiquitin-activating enzyme]-L-cysteine + [E2 ubiquitin-conjugating enzyme]-L-cysteine = [E1 ubiquitin-activating enzyme]-L-cysteine + S-ubiquitinyl-[E2 ubiquitin-conjugating enzyme]-L-cysteine.. The protein operates within protein modification; protein ubiquitination. Functionally, has a role in the DNA error-free postreplication repair (PRR) pathway. The ubc13/spm2 heterodimer catalyzes the synthesis of non-canonical poly-ubiquitin chains that are linked through 'Lys-63'. This Schizosaccharomyces pombe (strain 972 / ATCC 24843) (Fission yeast) protein is Ubiquitin-conjugating enzyme E2 13 (ubc13).